A 1046-amino-acid chain; its full sequence is Hemoglobin-haptoglobin-binding protein A (1046 aa).

An N-terminal signal peptide occupies residues 1 to 24 (MTNFRLNLLAYSVMLGLTAGVAYA). 4 repeat units span residues 26 to 29 (QPTN), 30 to 33 (QPTN), 34 to 37 (QPTN), and 38 to 41 (QPTN). The tract at residues 26–41 (QPTNQPTNQPTNQPTN) is 4 X 4 AA tandem repeats of Q-P-T-N. Residues 51 to 58 (EQINVLGS) carry the TonB box motif. The region spanning 61-188 (HNDNTPPKIA…LGGSVSFDTK (128 aa)) is the TBDR plug domain. Residues 196 to 1046 (NKNYYASYKR…NYRMSVQFEF (851 aa)) form the TBDR beta-barrel domain. The TonB C-terminal box signature appears at 1029-1046 (NRFYAPGRNYRMSVQFEF).

It belongs to the TonB-dependent receptor family. Hemoglobin/haptoglobin binding protein subfamily.

It is found in the cell outer membrane. Acts as a receptor for the hemoglobin/haptoglobin complex of the human host and is required for heme uptake. Does not bind hemoglobin alone. The chain is Hemoglobin-haptoglobin-binding protein A (hhuA) from Haemophilus influenzae.